The following is an 863-amino-acid chain: Leucine--tRNA ligase (863 aa).

The 'HIGH' region signature appears at 40–51 (PYPSGAGLHVGH). The short motif at 635–639 (KMSKS) is the 'KMSKS' region element. ATP is bound at residue K638.

This sequence belongs to the class-I aminoacyl-tRNA synthetase family.

The protein localises to the cytoplasm. It catalyses the reaction tRNA(Leu) + L-leucine + ATP = L-leucyl-tRNA(Leu) + AMP + diphosphate. The protein is Leucine--tRNA ligase of Leptospira interrogans serogroup Icterohaemorrhagiae serovar Lai (strain 56601).